The sequence spans 34 residues: Photosystem II reaction center protein M (34 aa).

A helical transmembrane segment spans residues 5–25 (ILAFIATALFILVPTAFLLII).

Belongs to the PsbM family. PSII is composed of 1 copy each of membrane proteins PsbA, PsbB, PsbC, PsbD, PsbE, PsbF, PsbH, PsbI, PsbJ, PsbK, PsbL, PsbM, PsbT, PsbX, PsbY, PsbZ, Psb30/Ycf12, at least 3 peripheral proteins of the oxygen-evolving complex and a large number of cofactors. It forms dimeric complexes.

It localises to the plastid. The protein resides in the chloroplast thylakoid membrane. Its function is as follows. One of the components of the core complex of photosystem II (PSII). PSII is a light-driven water:plastoquinone oxidoreductase that uses light energy to abstract electrons from H(2)O, generating O(2) and a proton gradient subsequently used for ATP formation. It consists of a core antenna complex that captures photons, and an electron transfer chain that converts photonic excitation into a charge separation. This subunit is found at the monomer-monomer interface. The sequence is that of Photosystem II reaction center protein M from Cucumis sativus (Cucumber).